The chain runs to 340 residues: Fructose import permease protein FruG (340 aa).

9 consecutive transmembrane segments (helical) span residues Ile23 to Phe43, Leu49 to Met69, Ile73 to Gly93, Val101 to Ala121, Met130 to Ile150, Leu182 to Leu202, Ile234 to Ile254, Val273 to Gly293, and Phe307 to Val327.

It belongs to the binding-protein-dependent transport system permease family. The complex is composed of an ATP-binding protein (FruK), two transmembrane proteins (FruF and FruG) and a solute-binding protein (FruE).

Its subcellular location is the cell membrane. Functionally, part of the high-affinity ABC transporter complex FruEKFG involved in fructose uptake. Can also transport ribose and xylose, with lower affinity. Probably responsible for the translocation of the substrate across the membrane. This chain is Fructose import permease protein FruG, found in Bifidobacterium longum (strain NCC 2705).